Reading from the N-terminus, the 260-residue chain is Indole-3-glycerol phosphate synthase (260 aa).

The protein belongs to the TrpC family.

The enzyme catalyses 1-(2-carboxyphenylamino)-1-deoxy-D-ribulose 5-phosphate + H(+) = (1S,2R)-1-C-(indol-3-yl)glycerol 3-phosphate + CO2 + H2O. Its pathway is amino-acid biosynthesis; L-tryptophan biosynthesis; L-tryptophan from chorismate: step 4/5. The protein is Indole-3-glycerol phosphate synthase of Staphylococcus aureus (strain Mu3 / ATCC 700698).